The chain runs to 585 residues: Proline--tRNA ligase (585 aa).

Belongs to the class-II aminoacyl-tRNA synthetase family. ProS type 1 subfamily. As to quaternary structure, homodimer.

The protein localises to the cytoplasm. It catalyses the reaction tRNA(Pro) + L-proline + ATP = L-prolyl-tRNA(Pro) + AMP + diphosphate. In terms of biological role, catalyzes the attachment of proline to tRNA(Pro) in a two-step reaction: proline is first activated by ATP to form Pro-AMP and then transferred to the acceptor end of tRNA(Pro). As ProRS can inadvertently accommodate and process non-cognate amino acids such as alanine and cysteine, to avoid such errors it has two additional distinct editing activities against alanine. One activity is designated as 'pretransfer' editing and involves the tRNA(Pro)-independent hydrolysis of activated Ala-AMP. The other activity is designated 'posttransfer' editing and involves deacylation of mischarged Ala-tRNA(Pro). The misacylated Cys-tRNA(Pro) is not edited by ProRS. The chain is Proline--tRNA ligase from Cutibacterium acnes (strain DSM 16379 / KPA171202) (Propionibacterium acnes).